A 360-amino-acid chain; its full sequence is Phospho-N-acetylmuramoyl-pentapeptide-transferase (360 aa).

10 helical membrane-spanning segments follow: residues 21 to 41, 73 to 93, 94 to 114, 132 to 152, 168 to 188, 199 to 219, 239 to 259, 263 to 283, 288 to 308, and 338 to 358; these read YITV…LWIG, TMGG…WANL, ANSY…IGFV, WKYF…YWLG, IMPQ…VGTG, GLAI…AWAT, VVVF…FNTY, VFMG…VAIL, FLLV…ILQV, and VIIR…VTLK.

It belongs to the glycosyltransferase 4 family. MraY subfamily. It depends on Mg(2+) as a cofactor.

Its subcellular location is the cell inner membrane. It carries out the reaction UDP-N-acetyl-alpha-D-muramoyl-L-alanyl-gamma-D-glutamyl-meso-2,6-diaminopimeloyl-D-alanyl-D-alanine + di-trans,octa-cis-undecaprenyl phosphate = di-trans,octa-cis-undecaprenyl diphospho-N-acetyl-alpha-D-muramoyl-L-alanyl-D-glutamyl-meso-2,6-diaminopimeloyl-D-alanyl-D-alanine + UMP. It functions in the pathway cell wall biogenesis; peptidoglycan biosynthesis. Functionally, catalyzes the initial step of the lipid cycle reactions in the biosynthesis of the cell wall peptidoglycan: transfers peptidoglycan precursor phospho-MurNAc-pentapeptide from UDP-MurNAc-pentapeptide onto the lipid carrier undecaprenyl phosphate, yielding undecaprenyl-pyrophosphoryl-MurNAc-pentapeptide, known as lipid I. The sequence is that of Phospho-N-acetylmuramoyl-pentapeptide-transferase from Haemophilus influenzae (strain 86-028NP).